The primary structure comprises 446 residues: Serine--tRNA ligase, mitochondrial (446 aa).

Position 251–253 (251–253 (TAE)) interacts with L-serine. ATP-binding positions include 284–286 (RAE) and V300. E307 is a binding site for L-serine. An ATP-binding site is contributed by 371 to 374 (EISS). Residue T407 coordinates L-serine.

This sequence belongs to the class-II aminoacyl-tRNA synthetase family. Type-1 seryl-tRNA synthetase subfamily. Homodimer. The tRNA molecule binds across the dimer.

It localises to the mitochondrion matrix. The catalysed reaction is tRNA(Ser) + L-serine + ATP = L-seryl-tRNA(Ser) + AMP + diphosphate + H(+). Catalyzes the attachment of serine to tRNA(Ser). In Saccharomyces cerevisiae (strain ATCC 204508 / S288c) (Baker's yeast), this protein is Serine--tRNA ligase, mitochondrial (DIA4).